The primary structure comprises 381 residues: Lysophosphatidylserine lipase ABHD12 (381 aa).

Topologically, residues 1-58 are cytoplasmic; it reads MRKRNESVTVEHERAAAAPAPLDKGCSLRHSLRLPAADTGMKRPLGRRHGLWFRLRRL. A helical transmembrane segment spans residues 59–79; it reads IIWLLGVYIAIPFLVKLCPAI. The Extracellular segment spans residues 80-381; sequence QAKLVFLNFV…LGIPEHEHHH (302 aa). A glycan (N-linked (GlcNAc...) asparagine) is linked at asparagine 106. The active-site Nucleophile is serine 229. Active-site charge relay system residues include aspartate 316 and histidine 355.

It belongs to the serine esterase family.

It is found in the endoplasmic reticulum membrane. The enzyme catalyses 1-(9Z-octadecenoyl)-sn-glycero-3-phospho-L-serine + H2O = sn-glycero-3-phospho-L-serine + (9Z)-octadecenoate + H(+). It carries out the reaction 1-(9Z-octadecenoyl)-sn-glycero-3-phospho-(1'-sn-glycerol) + H2O = sn-glycero-3-phospho-(1'-sn-glycerol) + (9Z)-octadecenoate + H(+). It catalyses the reaction 1-(9Z-octadecenoyl)-sn-glycero-3-phospho-(1D-myo-inositol) + H2O = sn-glycero-3-phospho-1D-myo-inositol + (9Z)-octadecenoate + H(+). The catalysed reaction is 1-(9Z-octadecenoyl)-sn-glycero-3-phosphoethanolamine + H2O = sn-glycero-3-phosphoethanolamine + (9Z)-octadecenoate + H(+). The enzyme catalyses 1-(9Z-octadecenoyl)-sn-glycero-3-phosphocholine + H2O = 1-(9Z-octadecenoyl)-sn-glycerol + phosphocholine + H(+). It carries out the reaction 2-(9Z-octadecenoyl)-glycerol + H2O = glycerol + (9Z)-octadecenoate + H(+). It catalyses the reaction 1-hexadecanoyl-sn-glycero-3-phospho-L-serine + H2O = sn-glycero-3-phospho-L-serine + hexadecanoate + H(+). The catalysed reaction is 2-(5Z,8Z,11Z,14Z-eicosatetraenoyl)-glycerol + H2O = glycerol + (5Z,8Z,11Z,14Z)-eicosatetraenoate + H(+). The enzyme catalyses Hydrolyzes glycerol monoesters of long-chain fatty acids.. It carries out the reaction 1-decanoylglycerol + H2O = decanoate + glycerol + H(+). It catalyses the reaction 1-dodecanoylglycerol + H2O = dodecanoate + glycerol + H(+). The catalysed reaction is 1-tetradecanoylglycerol + H2O = tetradecanoate + glycerol + H(+). The enzyme catalyses 2-hexadecanoylglycerol + H2O = glycerol + hexadecanoate + H(+). It carries out the reaction 1-(9Z-octadecenoyl)-glycerol + H2O = glycerol + (9Z)-octadecenoate + H(+). It catalyses the reaction 2-(9Z,12Z-octadecadienoyl)-glycerol + H2O = (9Z,12Z)-octadecadienoate + glycerol + H(+). The catalysed reaction is 1-(5Z,8Z,11Z,14Z-eicosatetraenoyl)-glycerol + H2O = glycerol + (5Z,8Z,11Z,14Z)-eicosatetraenoate + H(+). The enzyme catalyses 1-(9Z,12Z-octadecadienoyl)-glycerol + H2O = (9Z,12Z)-octadecadienoate + glycerol + H(+). It carries out the reaction 1-hexadecanoylglycerol + H2O = glycerol + hexadecanoate + H(+). It catalyses the reaction 1-octadecanoylglycerol + H2O = octadecanoate + glycerol + H(+). The catalysed reaction is 1-octadecanoyl-2-(9,10-epoxyoctadecanoyl)-sn-glycero-3-phospho-L-serine + H2O = 9,10-epoxyoctadecanoate + 1-octadecanoyl-sn-glycero-3-phosphoserine + H(+). The enzyme catalyses 1-octadecanoyl-2-(10-hydroxyoctadecanoyl)-sn-glycero-3-phospho-L-serine + H2O = 1-octadecanoyl-sn-glycero-3-phosphoserine + 10-hydroxyoctadecanoate + H(+). It carries out the reaction 1-hexadecanoyl-2-(10-hydroxyoctadecanoyl)-sn-glycero-3-phospho-L-serine + H2O = 10-hydroxyoctadecanoate + 1-hexadecanoyl-sn-glycero-3-phospho-L-serine + H(+). In terms of biological role, lysophosphatidylserine (LPS) lipase that mediates the hydrolysis of lysophosphatidylserine, a class of signaling lipids that regulates immunological and neurological processes. Represents a major lysophosphatidylserine lipase in the brain, thereby playing a key role in the central nervous system. Also able to hydrolyze oxidized phosphatidylserine; oxidized phosphatidylserine is produced in response to severe inflammatory stress and constitutes a proapoptotic 'eat me' signal. Also has monoacylglycerol (MAG) lipase activity: hydrolyzes 2-arachidonoylglycerol (2-AG), thereby acting as a regulator of endocannabinoid signaling pathways. Has a strong preference for very-long-chain lipid substrates; substrate specificity is likely due to improved catalysis and not improved substrate binding. In Gallus gallus (Chicken), this protein is Lysophosphatidylserine lipase ABHD12.